Reading from the N-terminus, the 507-residue chain is FAD-linked oxidoreductase OXR1 (507 aa).

The N-terminal stretch at 1–21 (MTIKFASLILAGLGLGSGALG) is a signal peptide. Asn34 and Asn65 each carry an N-linked (GlcNAc...) asparagine glycan. Residues 73 to 245 (YAPPTFKVSV…VSATYKLKPL (173 aa)) form the FAD-binding PCMH-type domain. N-linked (GlcNAc...) asparagine glycans are attached at residues Asn263 and Asn288.

It belongs to the oxygen-dependent FAD-linked oxidoreductase family. FAD is required as a cofactor.

It carries out the reaction dihydropyriculol + A = pyriculol + AH2. It catalyses the reaction dihydropyriculariol + A = pyriculariol + AH2. Its pathway is polyketide biosynthesis. In terms of biological role, FAD-linked oxidoreductase; part of the gene cluster that mediates the biosynthesis of pyriculol and pyriculariol, two heptaketides that induce lesion formation upon application on rice leaves but are dispensable for pathogenicity. The highly reducing polyketide synthase synthesizes the heptaketide backbone of pyriculol and pyriculariol. Pyriculol and pyriculariol contain several hydroxyl moieties and double bonds, so it can be assumed that several reduction steps occur during biosynthesis. These reactions could be executed by PKS19 itself or partly by the tailoring enzymes OXR1, OXR2, RED1, RED2 or RED3, identified within the cluster. The FAD-linked oxidoreductase OXR1 is the only tailoring enzyme for which the function has been determined yet, and is involved in the oxidation of dihydropyriculol and dihydropyriculariol into pyriculol and pyriculariol, respectively. The protein is FAD-linked oxidoreductase OXR1 of Pyricularia oryzae (strain 70-15 / ATCC MYA-4617 / FGSC 8958) (Rice blast fungus).